We begin with the raw amino-acid sequence, 337 residues long: Tetraacyldisaccharide 4'-kinase (337 aa).

58 to 65 provides a ligand contact to ATP; sequence TVGGSGKT.

The protein belongs to the LpxK family.

It catalyses the reaction a lipid A disaccharide + ATP = a lipid IVA + ADP + H(+). The protein operates within glycolipid biosynthesis; lipid IV(A) biosynthesis; lipid IV(A) from (3R)-3-hydroxytetradecanoyl-[acyl-carrier-protein] and UDP-N-acetyl-alpha-D-glucosamine: step 6/6. In terms of biological role, transfers the gamma-phosphate of ATP to the 4'-position of a tetraacyldisaccharide 1-phosphate intermediate (termed DS-1-P) to form tetraacyldisaccharide 1,4'-bis-phosphate (lipid IVA). The sequence is that of Tetraacyldisaccharide 4'-kinase from Shewanella putrefaciens (strain CN-32 / ATCC BAA-453).